A 155-amino-acid chain; its full sequence is Secreted RxLR effector protein RXLR-C301 (155 aa).

An N-terminal signal peptide occupies residues 1–24 (MRLYALSVSLLAAITLLACVIASA). Residues 34–64 (RRLSQDVSETEITELSESKKPTAQDIDNEER) carry the RxLR-dEER motif.

The protein belongs to the RxLR effector family.

It is found in the secreted. The protein resides in the host cell membrane. Functionally, secreted effector that does not suppress pattern-triggered immunity (PTI) in plant host. This chain is Secreted RxLR effector protein RXLR-C301, found in Plasmopara halstedii (Downy mildew of sunflower).